An 821-amino-acid chain; its full sequence is Serine/threonine-protein kinase RAD53 (821 aa).

The residue at position 24 (S24) is a Phosphoserine. The FHA 1 domain maps to 66-116; the sequence is WTFGRNPACDYHLGNISRLSNKHFQILLGEDGNLLLNDISTNGTWLNGQKV. S175 bears the Phosphoserine mark. The Protein kinase domain maps to 198–466; the sequence is SIIDEVVGQG…AAKALNHPWI (269 aa). ATP-binding positions include 204-212 and K227; that span reads VGQGAFATV. D319 serves as the catalytic Proton acceptor. A phosphoserine mark is found at S547 and S560. Positions 601 to 664 constitute an FHA 2 domain; the sequence is FFIGRSEDCN…NVSYLNNNRM (64 aa). A disordered region spans residues 735–770; it reads AAQRANQPSASSSSMSAKKPPVSDTNNNGNNSVLND. Residues 742-770 show a composition bias toward low complexity; sequence PSASSSSMSAKKPPVSDTNNNGNNSVLND. Phosphoserine occurs at positions 774 and 793. The segment at 791-821 is disordered; sequence SLSQSQIDPSKKVKRAKLDQTSKGPENLQFS. Positions 809-821 are enriched in polar residues; that stretch reads DQTSKGPENLQFS.

Belongs to the protein kinase superfamily. CAMK Ser/Thr protein kinase family. CHEK2 subfamily. As to quaternary structure, interacts (via domain FHA 1) with PTC2 (when phosphorylated); the interaction is direct and serves to regulate DNA damage checkpoint signaling. Interacts with PIN4. Post-translationally, autophosphorylated. Phosphorylated in response to DNA double-strand breaks; dephosphorylation is mediated by PTC2 and PTC3.

It localises to the nucleus. The catalysed reaction is L-seryl-[protein] + ATP = O-phospho-L-seryl-[protein] + ADP + H(+). The enzyme catalyses L-threonyl-[protein] + ATP = O-phospho-L-threonyl-[protein] + ADP + H(+). It catalyses the reaction L-tyrosyl-[protein] + ATP = O-phospho-L-tyrosyl-[protein] + ADP + H(+). Its activity is regulated as follows. Inactivated by dephosphorylation via recruitment of PTC2. Controls S-phase checkpoint as well as G1 and G2 DNA damage checkpoints. Phosphorylates proteins on serine, threonine, and tyrosine. Prevents entry into anaphase and mitotic exit after DNA damage via regulation of the Polo kinase CDC5. Seems to be involved in the phosphorylation of RPH1. This chain is Serine/threonine-protein kinase RAD53 (RAD53), found in Saccharomyces cerevisiae (strain ATCC 204508 / S288c) (Baker's yeast).